The primary structure comprises 78 residues: Cytochrome c oxidase subunit 6b-3 (78 aa).

One can recognise a CHCH domain in the interval Thr22–Trp65. Residues Cys25–Cys35 carry the Cx9C motif motif. 2 disulfide bridges follow: Cys25-Cys57 and Cys35-Cys46. The Cx10C motif motif lies at Cys46–Cys57.

The protein belongs to the cytochrome c oxidase subunit 6B (TC 3.D.4.8) family. In terms of tissue distribution, expressed in the whole plant.

It is found in the mitochondrion. Functionally, this protein is one of the nuclear-coded polypeptide chains of cytochrome c oxidase, the terminal oxidase in mitochondrial electron transport. This protein may be one of the heme-binding subunits of the oxidase. This chain is Cytochrome c oxidase subunit 6b-3 (COX6B-3), found in Arabidopsis thaliana (Mouse-ear cress).